The sequence spans 295 residues: Sulfotransferase 1E1 (295 aa).

48 to 53 contributes to the 3'-phosphoadenylyl sulfate binding site; sequence KSGSTW. Position 106 to 108 (106 to 108) interacts with substrate; it reads KTH. The Proton acceptor role is filled by His-108. 3'-phosphoadenylyl sulfate contacts are provided by Arg-130 and Ser-138. Ser-156 is modified (phosphoserine). 3'-phosphoadenylyl sulfate contacts are provided by residues Tyr-193, 227–232, and 257–259; these read TSFQEM and RKG.

Belongs to the sulfotransferase 1 family. Homodimer. Liver of young mature males and uterus.

Its subcellular location is the cytoplasm. It is found in the cytosol. It catalyses the reaction estrone + 3'-phosphoadenylyl sulfate = estrone 3-sulfate + adenosine 3',5'-bisphosphate + H(+). It carries out the reaction (24S)-hydroxycholesterol + 3'-phosphoadenylyl sulfate = (24S)-hydroxycholesterol 3-sulfate + adenosine 3',5'-bisphosphate + H(+). The enzyme catalyses 17beta-estradiol + 3'-phosphoadenylyl sulfate = 17beta-estradiol 3-sulfate + adenosine 3',5'-bisphosphate + H(+). The catalysed reaction is 3beta-hydroxyandrost-5-en-17-one + 3'-phosphoadenylyl sulfate = dehydroepiandrosterone 3-sulfate + adenosine 3',5'-bisphosphate + H(+). It catalyses the reaction 4-ethylphenol + 3'-phosphoadenylyl sulfate = 4-ethylphenyl sulfate + adenosine 3',5'-bisphosphate + H(+). With respect to regulation, inhibited by estradiol. In terms of biological role, sulfotransferase that utilizes 3'-phospho-5'-adenylyl sulfate (PAPS) as sulfonate donor to catalyze the sulfate conjugation of estradiol and estrone. Is a key enzyme in estrogen homeostasis, the sulfation of estrogens leads to their inactivation. Also sulfates dehydroepiandrosterone (DHEA), pregnenolone, (24S)-hydroxycholesterol and xenobiotic compounds like ethinylestradiol, equalenin, diethyl stilbesterol and 1-naphthol at significantly lower efficiency. Does not sulfonate cortisol, testosterone and dopamine. May play a role in gut microbiota-host metabolic interaction. O-sulfonates 4-ethylphenol (4-EP), a dietary tyrosine-derived metabolite produced by gut bacteria. The product 4-EPS crosses the blood-brain barrier and may negatively regulate oligodendrocyte maturation and myelination, affecting the functional connectivity of different brain regions associated with the limbic system. The polypeptide is Sulfotransferase 1E1 (Rattus norvegicus (Rat)).